A 305-amino-acid chain; its full sequence is T-cell immunoglobulin and mucin domain-containing protein 2 (305 aa).

Positions 1 to 21 (MNQIQVFISGLILLLPGAVES) are cleaved as a signal peptide. One can recognise an Ig-like V-type domain in the interval 22 to 125 (HTAVQGLAGH…AFHFVDYMLE (104 aa)). The Extracellular segment spans residues 22 to 231 (HTAVQGLAGH…QKPQKNLNKG (210 aa)). Cystine bridges form between Cys37/Cys109, Cys50/Cys61, and Cys56/Cys108. Asn86 and Asn91 each carry an N-linked (GlcNAc...) asparagine glycan. The disordered stretch occupies residues 130–174 (ISTSPPTRPTATGRPTTISTRSTHVPTSTRVSTSTSPTPAHTETY). A compositionally biased stretch (low complexity) spans 131-167 (STSPPTRPTATGRPTTISTRSTHVPTSTRVSTSTSPT). The helical transmembrane segment at 232 to 252 (FYVGISIAALLILMLLSTMVI) threads the bilayer. Residues 253 to 305 (TRYVVMKRKSESLSFVAFPISKIGASPKKVVERTRCEDQVYIIEDTPYPEEES) are Cytoplasmic-facing.

The protein belongs to the immunoglobulin superfamily. TIM family. As to quaternary structure, homodimer. Expressed on late differentiated Th2 cells. Expressed also on all splenic B-cells, with increased levels on germinal center B-cells, in the liver, especially in bile duct epithelial cells, and in renal tubule cells. Within retina, mainly expressed in Mueller cells.

The protein localises to the cell membrane. Its function is as follows. Cell surface glycoprotein that participates in iron homeostasis in the liver, the kidney, the retina and oligodendrocytes by acting as a receptor of H-ferritin. Mechanistically, mediates iron-containing ferritin uptake via an endocytic pathway, trafficking to endosomes and subsequently to lysosomes. Plays also an important role in the regulation of Th2 immunity. Receptor for SEMA4A involved in the regulation of T-cell function, enhancing T-cell activation. This Mus musculus (Mouse) protein is T-cell immunoglobulin and mucin domain-containing protein 2 (Timd2).